The chain runs to 259 residues: Alpha-acetolactate decarboxylase (259 aa).

The protein belongs to the alpha-acetolactate decarboxylase family.

The catalysed reaction is (2S)-2-acetolactate + H(+) = (R)-acetoin + CO2. It functions in the pathway polyol metabolism; (R,R)-butane-2,3-diol biosynthesis; (R,R)-butane-2,3-diol from pyruvate: step 2/3. Functionally, converts acetolactate into acetoin, which can be excreted by the cells. This may be a mechanism for controlling the internal pH of cells in the stationary stage. This is Alpha-acetolactate decarboxylase (budA) from Raoultella terrigena (Klebsiella terrigena).